The sequence spans 375 residues: Phospho-N-acetylmuramoyl-pentapeptide-transferase (375 aa).

10 helical membrane-spanning segments follow: residues 2 to 22, 55 to 75, 82 to 102, 120 to 140, 158 to 178, 198 to 218, 237 to 257, 264 to 284, 289 to 309, and 345 to 365; these read IGLL…TPLF, AVII…LAVL, PTAS…VGFV, GKII…LNFP, IPWL…FVIW, GLAT…SLFQ, PMDL…FLWW, IFMG…FAIF, ILVA…IIQV, and WLLS…DWLI.

Belongs to the glycosyltransferase 4 family. MraY subfamily. It depends on Mg(2+) as a cofactor.

The protein localises to the cell membrane. The enzyme catalyses UDP-N-acetyl-alpha-D-muramoyl-L-alanyl-gamma-D-glutamyl-meso-2,6-diaminopimeloyl-D-alanyl-D-alanine + di-trans,octa-cis-undecaprenyl phosphate = di-trans,octa-cis-undecaprenyl diphospho-N-acetyl-alpha-D-muramoyl-L-alanyl-D-glutamyl-meso-2,6-diaminopimeloyl-D-alanyl-D-alanine + UMP. It participates in cell wall biogenesis; peptidoglycan biosynthesis. Functionally, catalyzes the initial step of the lipid cycle reactions in the biosynthesis of the cell wall peptidoglycan: transfers peptidoglycan precursor phospho-MurNAc-pentapeptide from UDP-MurNAc-pentapeptide onto the lipid carrier undecaprenyl phosphate, yielding undecaprenyl-pyrophosphoryl-MurNAc-pentapeptide, known as lipid I. This is Phospho-N-acetylmuramoyl-pentapeptide-transferase from Micrococcus luteus (strain ATCC 4698 / DSM 20030 / JCM 1464 / CCM 169 / CCUG 5858 / IAM 1056 / NBRC 3333 / NCIMB 9278 / NCTC 2665 / VKM Ac-2230) (Micrococcus lysodeikticus).